The chain runs to 478 residues: Kynureninase (478 aa).

Residues leucine 150, threonine 151, 178-181 (FPSD), serine 234, aspartate 263, histidine 266, and tyrosine 288 each bind pyridoxal 5'-phosphate. N6-(pyridoxal phosphate)lysine is present on lysine 289. Pyridoxal 5'-phosphate contacts are provided by tryptophan 318 and asparagine 346.

It belongs to the kynureninase family. In terms of assembly, homodimer. It depends on pyridoxal 5'-phosphate as a cofactor.

Its subcellular location is the cytoplasm. It catalyses the reaction L-kynurenine + H2O = anthranilate + L-alanine + H(+). The enzyme catalyses 3-hydroxy-L-kynurenine + H2O = 3-hydroxyanthranilate + L-alanine + H(+). It functions in the pathway amino-acid degradation; L-kynurenine degradation; L-alanine and anthranilate from L-kynurenine: step 1/1. It participates in cofactor biosynthesis; NAD(+) biosynthesis; quinolinate from L-kynurenine: step 2/3. In terms of biological role, catalyzes the cleavage of L-kynurenine (L-Kyn) and L-3-hydroxykynurenine (L-3OHKyn) into anthranilic acid (AA) and 3-hydroxyanthranilic acid (3-OHAA), respectively. The protein is Kynureninase of Caenorhabditis elegans.